The following is a 314-amino-acid chain: tRNA dimethylallyltransferase 1 (314 aa).

Position 8–15 (8–15) interacts with ATP; it reads GPTGTGKS. Position 10-15 (10-15) interacts with substrate; the sequence is TGTGKS.

Belongs to the IPP transferase family. In terms of assembly, monomer. Requires Mg(2+) as cofactor.

The catalysed reaction is adenosine(37) in tRNA + dimethylallyl diphosphate = N(6)-dimethylallyladenosine(37) in tRNA + diphosphate. In terms of biological role, catalyzes the transfer of a dimethylallyl group onto the adenine at position 37 in tRNAs that read codons beginning with uridine, leading to the formation of N6-(dimethylallyl)adenosine (i(6)A). The chain is tRNA dimethylallyltransferase 1 from Mycobacterium marinum (strain ATCC BAA-535 / M).